The following is a 548-amino-acid chain: Undecaprenyl phosphate-alpha-4-amino-4-deoxy-L-arabinose arabinosyl transferase 1 (548 aa).

Helical transmembrane passes span 11–31, 89–109, 114–134, 137–157, 180–200, 214–234, 263–283, 292–312, 314–334, 347–367, 382–402, and 405–425; these read WLLFFLFILLTYFIPLETRLL, IVVVTSTLLTGWLIYKAAMVV, ALAFNAMTVFLSSFLVLAIGT, ILDPIVTLFVTAAMYSFLVAL, FLTKGFIAVVLPALVFLVMAI, IALLALAITAGPWVITVALQA, FYIPIVILGVLPWLGFLFGAL, GTLYFLLWFTLFFAFFSASKG, LLTYMLPCFVPLSILIAHYIE, VNASINIAFGLMGISAVIYSL, KIVLAISGFLFWSVIGAGALF, and TQFLTMFCSIGLSLVIGYAIP.

This sequence belongs to the glycosyltransferase 83 family.

The protein localises to the cell inner membrane. The catalysed reaction is 4-amino-4-deoxy-alpha-L-arabinopyranosyl di-trans,octa-cis-undecaprenyl phosphate + lipid IVA = lipid IIA + di-trans,octa-cis-undecaprenyl phosphate.. The protein operates within lipopolysaccharide metabolism; 4-amino-4-deoxy-beta-L-arabinose-lipid A biosynthesis. In terms of biological role, catalyzes the transfer of the L-Ara4N moiety of the glycolipid undecaprenyl phosphate-alpha-L-Ara4N to lipid A. The modified arabinose is attached to lipid A and is required for resistance to polymyxin and cationic antimicrobial peptides. The polypeptide is Undecaprenyl phosphate-alpha-4-amino-4-deoxy-L-arabinose arabinosyl transferase 1 (Proteus mirabilis (strain HI4320)).